A 4513-amino-acid polypeptide reads, in one-letter code: Dynein-1-beta heavy chain, flagellar inner arm I1 complex (4513 aa).

Residues 1–1806 (MEPGDEGKGH…IVKQVLSVFY (1806 aa)) form a stem region. Coiled-coil stretches lie at residues 192–223 (KAAAKQKDLVQRLESTIIHWTRQVKELLNQQD), 1544–1577 (TAQGLLESFQDMNNKLERIQKSLDNYLENKRQQF), and 1704–1727 (THECEKALADADSARKNLKLLKKK). AAA regions lie at residues 1807–2028 (YGYE…PIAR), 2089–2350 (RAIE…VPEN), 2458–2706 (FKPA…IIQG), and 2808–3059 (DYAL…LKRR). ATP contacts are provided by residues 1845-1852 (GPAGTGKT), 2127-2134 (GRTGSGKS), 2497-2504 (GNVGVGKT), and 2848-2855 (GVGGSGRK). 3 coiled-coil regions span residues 3107 to 3193 (AAMK…LTKK), 3301 to 3384 (KRAK…SISE), and 3499 to 3519 (RLKVLNLQMSDMARQIENAIQ). The stalk stretch occupies residues 3107 to 3384 (AAMKKVAEEK…RVRWEASISE (278 aa)). AAA stretches follow at residues 3443-3674 (LANP…EVNA) and 3890-4109 (ATTY…LLKS).

As to quaternary structure, the I1 inner arm complex (also known as the f dynein complex) is a two-headed isoform composed of two heavy chains (1-alpha and 1-beta), three intermediate chains and three light chains. I1 occupies a specific position proximal to the first radial spoke and repeats every 96 nm along the length of the axoneme.

The protein resides in the cell projection. Its subcellular location is the cilium. It is found in the flagellum. It localises to the cytoplasm. The protein localises to the cytoskeleton. The protein resides in the flagellum axoneme. In terms of biological role, force generating protein of eukaryotic cilia and flagella. Produces force towards the minus ends of microtubules. Dynein has ATPase activity; the force-producing power stroke is thought to occur on release of ADP. Required for assembly of the I1 inner arm complex and its targeting to the appropriate axoneme location. Also required for phototaxis. This chain is Dynein-1-beta heavy chain, flagellar inner arm I1 complex (DHC10), found in Chlamydomonas reinhardtii (Chlamydomonas smithii).